The sequence spans 307 residues: Glutenin, low molecular weight subunit 1D1 (307 aa).

An N-terminal signal peptide occupies residues 1-23 (MKTFLVFALLAVAATSAIAQMET). Disordered regions lie at residues 31 to 88 (RPWQ…ILPQ) and 105 to 126 (PFSQQQQPVLPPQQSPFPQQQQ). Residues 43–88 (TFPQQPLFSQQQQQQLFPQQPSFSQQQPPFWQQQPPFSQQQPILPQ) show a composition bias toward low complexity.

This sequence belongs to the gliadin/glutenin family. Disulfide-bridge linked aggregates. As to expression, expressed in endosperm, but not in husk and leaf tissues.

In terms of biological role, glutenins are high-molecular weight seed storage proteins of wheat endosperm. Thought to be responsible for the visco-elastic property of wheat dough. This Triticum aestivum (Wheat) protein is Glutenin, low molecular weight subunit 1D1.